A 145-amino-acid polypeptide reads, in one-letter code: Putative BCoR-like protein 2 (145 aa).

Positions 1–27 are enriched in basic and acidic residues; it reads MKEKLSKKRAEVKGNRSWLEEFLKPSD. The segment at 1 to 58 is disordered; the sequence is MKEKLSKKRAEVKGNRSWLEEFLKPSDNEEGPPPKNKVLSNNASSQKPTHSSCIPLLR. Over residues 38-52 the composition is skewed to polar residues; it reads VLSNNASSQKPTHSS.

It belongs to the BCOR family.

This Homo sapiens (Human) protein is Putative BCoR-like protein 2 (BCORP1).